The following is a 429-amino-acid chain: Glutamate-1-semialdehyde 2,1-aminomutase (429 aa).

Lys-265 bears the N6-(pyridoxal phosphate)lysine mark.

This sequence belongs to the class-III pyridoxal-phosphate-dependent aminotransferase family. HemL subfamily. Homodimer. Pyridoxal 5'-phosphate serves as cofactor.

It is found in the cytoplasm. It carries out the reaction (S)-4-amino-5-oxopentanoate = 5-aminolevulinate. The protein operates within porphyrin-containing compound metabolism; protoporphyrin-IX biosynthesis; 5-aminolevulinate from L-glutamyl-tRNA(Glu): step 2/2. This chain is Glutamate-1-semialdehyde 2,1-aminomutase, found in Alkalilimnicola ehrlichii (strain ATCC BAA-1101 / DSM 17681 / MLHE-1).